Consider the following 852-residue polypeptide: Ubiquitin carboxyl-terminal hydrolase 4 (852 aa).

The Rhodanese domain maps to 172–296; the sequence is ASGTVLLVDV…WSNAHPDFCV (125 aa). Residues 369-393 are disordered; it reads RSSSSSSNINERPGSVPPQLSNGST. A USP domain is found at 488-849; that stretch reads VGLVNCGNSC…NAYVLFYHRI (362 aa). Cys-497 acts as the Nucleophile in catalysis. His-806 (proton acceptor) is an active-site residue.

It belongs to the peptidase C19 family.

The protein resides in the cytoplasm. It localises to the late endosome membrane. It carries out the reaction Thiol-dependent hydrolysis of ester, thioester, amide, peptide and isopeptide bonds formed by the C-terminal Gly of ubiquitin (a 76-residue protein attached to proteins as an intracellular targeting signal).. Its activity is regulated as follows. RFU1 is an inhibitor of deubiquitination activity. Ubiquitin thioesterase that acts at the late endosome/prevacuolar compartment to recover ubiquitin from ubiquitinated membrane proteins en route to the vacuole. Also removes ubiquitin from soluble proteins targeted to proteasomes. Is essential to maintain a normal level of free ubiquitin. Required for promoting coordination of DNA replication and avoids DNA overreplication. This Eremothecium gossypii (strain ATCC 10895 / CBS 109.51 / FGSC 9923 / NRRL Y-1056) (Yeast) protein is Ubiquitin carboxyl-terminal hydrolase 4 (DOA4).